The chain runs to 176 residues: Shikimate kinase (176 aa).

12-17 provides a ligand contact to ATP; sequence GSGKST. Residue serine 16 coordinates Mg(2+). Residues aspartate 34, arginine 58, and glycine 80 each contribute to the substrate site. Residue arginine 117 coordinates ATP. Substrate is bound at residue arginine 136. Arginine 153 is an ATP binding site.

Belongs to the shikimate kinase family. Monomer. It depends on Mg(2+) as a cofactor.

It is found in the cytoplasm. The enzyme catalyses shikimate + ATP = 3-phosphoshikimate + ADP + H(+). Its pathway is metabolic intermediate biosynthesis; chorismate biosynthesis; chorismate from D-erythrose 4-phosphate and phosphoenolpyruvate: step 5/7. In terms of biological role, catalyzes the specific phosphorylation of the 3-hydroxyl group of shikimic acid using ATP as a cosubstrate. The polypeptide is Shikimate kinase (Mycobacterium avium (strain 104)).